A 317-amino-acid polypeptide reads, in one-letter code: Melanocyte-stimulating hormone receptor (317 aa).

At 1 to 37 the chain is on the extracellular side; sequence MRVQGSQRRLLGSLNSTPTATPHLGLAANQTGARCLE. An N-linked (GlcNAc...) asparagine glycan is attached at Asn-29. A helical transmembrane segment spans residues 38-63; sequence VSIPDGLFLSLGLVSLVENVLVVTAI. The Cytoplasmic segment spans residues 64–72; the sequence is AKNRNLHSP. Residues 73–93 form a helical membrane-spanning segment; it reads MYCFICCLALSDLLVSGSNML. Residues 94–118 are Extracellular-facing; sequence ETAVTLLLEAGALAARAAVVQQLDN. A helical membrane pass occupies residues 119–140; sequence VIDVITCSSMLSSLCFLGAIAV. Residues 141-163 are Cytoplasmic-facing; the sequence is DRYISIFYALRYHSIVTLPRARR. Residues 164–183 traverse the membrane as a helical segment; sequence AIAAIWVASVLCSTLFIAYY. At 184-191 the chain is on the extracellular side; the sequence is DHAAVLLC. Residues 192-211 form a helical membrane-spanning segment; it reads LVVFFLAMLVLMAVLYVHML. The Cytoplasmic portion of the chain corresponds to 212–240; sequence ARACQHAQGIARLHKRQRLAHQGFGLKGA. Residues 241–266 traverse the membrane as a helical segment; it reads ATLTILLGIFFLCWGPFFLHLTLIVL. Over 267–279 the chain is Extracellular; sequence CPQHPTCSCIFKN. The chain crosses the membrane as a helical span at residues 280–300; the sequence is FNLFLALIICNAIIDPLIYAF. Over 301–317 the chain is Cytoplasmic; sequence RSQELRRTLKEVLLCSW. Cys-315 is lipidated: S-palmitoyl cysteine.

This sequence belongs to the G-protein coupled receptor 1 family. Interacts with MGRN1, but does not undergo MGRN1-mediated ubiquitination; this interaction competes with GNAS-binding and thus inhibits agonist-induced cAMP production. Interacts with OPN3; the interaction results in a decrease in MC1R-mediated cAMP signaling and ultimately a decrease in melanin production in melanocytes.

Its subcellular location is the cell membrane. Receptor for MSH (alpha, beta and gamma) and ACTH. The activity of this receptor is mediated by G proteins which activate adenylate cyclase. Mediates melanogenesis, the production of eumelanin (black/brown) and phaeomelanin (red/yellow), via regulation of cAMP signaling in melanocytes. The protein is Melanocyte-stimulating hormone receptor (MC1R) of Macaca nigra (Celebes black macaque).